We begin with the raw amino-acid sequence, 471 residues long: UDP-N-acetylmuramoylalanine--D-glutamate ligase (471 aa).

122 to 128 (GTNGKTT) contacts ATP.

The protein belongs to the MurCDEF family.

It is found in the cytoplasm. The enzyme catalyses UDP-N-acetyl-alpha-D-muramoyl-L-alanine + D-glutamate + ATP = UDP-N-acetyl-alpha-D-muramoyl-L-alanyl-D-glutamate + ADP + phosphate + H(+). It functions in the pathway cell wall biogenesis; peptidoglycan biosynthesis. In terms of biological role, cell wall formation. Catalyzes the addition of glutamate to the nucleotide precursor UDP-N-acetylmuramoyl-L-alanine (UMA). The chain is UDP-N-acetylmuramoylalanine--D-glutamate ligase from Streptomyces coelicolor (strain ATCC BAA-471 / A3(2) / M145).